Consider the following 152-residue polypeptide: 3-hydroxyacyl-[acyl-carrier-protein] dehydratase FabZ (152 aa).

The active site involves H58.

The protein belongs to the thioester dehydratase family. FabZ subfamily.

It localises to the cytoplasm. The catalysed reaction is a (3R)-hydroxyacyl-[ACP] = a (2E)-enoyl-[ACP] + H2O. Its function is as follows. Involved in unsaturated fatty acids biosynthesis. Catalyzes the dehydration of short chain beta-hydroxyacyl-ACPs and long chain saturated and unsaturated beta-hydroxyacyl-ACPs. The chain is 3-hydroxyacyl-[acyl-carrier-protein] dehydratase FabZ from Synechococcus sp. (strain RCC307).